The primary structure comprises 573 residues: 3-(3-hydroxy-phenyl)propionate/3-hydroxycinnamic acid hydroxylase (573 aa).

FAD is bound by residues 18–47 (DVVIVGAGPVGLTLANILGLQGVRTMIVEE) and 283–293 (FRKGRMFLAGD).

Belongs to the PheA/TfdB FAD monooxygenase family. FAD is required as a cofactor.

It carries out the reaction 3-(3-hydroxyphenyl)propanoate + NADH + O2 + H(+) = 3-(2,3-dihydroxyphenyl)propanoate + NAD(+) + H2O. It catalyses the reaction (2E)-3-(3-hydroxyphenyl)prop-2-enoate + NADH + O2 + H(+) = (2E)-3-(2,3-dihydroxyphenyl)prop-2-enoate + NAD(+) + H2O. The protein operates within aromatic compound metabolism; 3-phenylpropanoate degradation. Functionally, catalyzes the insertion of one atom of molecular oxygen into position 2 of the phenyl ring of 3-(3-hydroxyphenyl)propionate (3-HPP) and hydroxycinnamic acid (3HCI). The sequence is that of 3-(3-hydroxy-phenyl)propionate/3-hydroxycinnamic acid hydroxylase from Mycobacterium sp. (strain KMS).